The primary structure comprises 140 residues: Small ribosomal subunit protein uS12 (140 aa).

Asp-102 carries the post-translational modification 3-methylthioaspartic acid.

This sequence belongs to the universal ribosomal protein uS12 family. In terms of assembly, part of the 30S ribosomal subunit. Contacts proteins S8 and S17. May interact with IF1 in the 30S initiation complex.

Its function is as follows. With S4 and S5 plays an important role in translational accuracy. Functionally, interacts with and stabilizes bases of the 16S rRNA that are involved in tRNA selection in the A site and with the mRNA backbone. Located at the interface of the 30S and 50S subunits, it traverses the body of the 30S subunit contacting proteins on the other side and probably holding the rRNA structure together. The combined cluster of proteins S8, S12 and S17 appears to hold together the shoulder and platform of the 30S subunit. The protein is Small ribosomal subunit protein uS12 of Geobacillus stearothermophilus (Bacillus stearothermophilus).